A 101-amino-acid polypeptide reads, in one-letter code: Protein Tat (101 aa).

Positions 1–24 (MDPVDPKLEPWNHPGSQPTTPCNK) are interaction with human CREBBP. Residues 1 to 48 (MDPVDPKLEPWNHPGSQPTTPCNKCYCKVCCWHCQVCFLNKGLGISYG) form a transactivation region. 3 residues coordinate Zn(2+): cysteine 22, cysteine 25, and cysteine 27. Positions 22–37 (CNKCYCKVCCWHCQVC) are cysteine-rich. Position 28 is an N6-acetyllysine; by host PCAF (lysine 28). Positions 30, 33, 34, and 37 each coordinate Zn(2+). Residues 38–48 (FLNKGLGISYG) are core. The interval 48–101 (GRKKRRPRRGTPQGSKDHQNPVPKQPLPITSGNPTGSEKPKKEVASKTETDPLD) is disordered. The Nuclear localization signal, RNA-binding (TAR), and protein transduction signature appears at 49 to 57 (RKKRRPRRG). The interval 49–86 (RKKRRPRRGTPQGSKDHQNPVPKQPLPITSGNPTGSEK) is interaction with the host capping enzyme RNGTT. An N6-acetyllysine; by host EP300 and GCN5L2 mark is found at lysine 50 and lysine 51. An asymmetric dimethylarginine; by host PRMT6 mark is found at arginine 52 and arginine 53. Residue lysine 71 forms a Glycyl lysine isopeptide (Lys-Gly) (interchain with G-Cter in ubiquitin) linkage. Basic and acidic residues predominate over residues 85 to 101 (EKPKKEVASKTETDPLD).

It belongs to the lentiviruses Tat family. In terms of assembly, interacts with host CCNT1. Associates with the P-TEFb complex composed at least of Tat, P-TEFb (CDK9 and CCNT1), TAR RNA, RNA Pol II. Recruits the HATs CREBBP, TAF1/TFIID, EP300, PCAF and GCN5L2. Interacts with host KAT5/Tip60; this interaction targets the latter to degradation. Interacts with the host deacetylase SIRT1. Interacts with host capping enzyme RNGTT; this interaction stimulates RNGTT. Binds to host KDR, and to the host integrins ITGAV/ITGB3 and ITGA5/ITGB1. Interacts with host KPNB1/importin beta-1 without previous binding to KPNA1/importin alpha-1. Interacts with EIF2AK2. Interacts with host nucleosome assembly protein NAP1L1; this interaction may be required for the transport of Tat within the nucleus, since the two proteins interact at the nuclear rim. Interacts with host C1QBP/SF2P32; this interaction involves lysine-acetylated Tat. Interacts with the host chemokine receptors CCR2, CCR3 and CXCR4. Interacts with host DPP4/CD26; this interaction may trigger an anti-proliferative effect. Interacts with host LDLR. Interacts with the host extracellular matrix metalloproteinase MMP1. Interacts with host PRMT6; this interaction mediates Tat's methylation. Interacts with, and is ubiquitinated by MDM2/Hdm2. Interacts with host PSMC3 and HTATIP2. Interacts with STAB1; this interaction may overcome SATB1-mediated repression of IL2 and IL2RA (interleukin) in T cells by binding to the same domain than HDAC1. Interacts (when acetylated) with human CDK13, thereby increasing HIV-1 mRNA splicing and promoting the production of the doubly spliced HIV-1 protein Nef. Interacts with host TBP; this interaction modulates the activity of transcriptional pre-initiation complex. Interacts with host RELA. Interacts with host PLSCR1; this interaction negatively regulates Tat transactivation activity by altering its subcellular distribution. Asymmetrical arginine methylation by host PRMT6 seems to diminish the transactivation capacity of Tat and affects the interaction with host CCNT1. In terms of processing, acetylation by EP300, CREBBP, GCN5L2/GCN5 and PCAF regulates the transactivation activity of Tat. EP300-mediated acetylation of Lys-50 promotes dissociation of Tat from the TAR RNA through the competitive binding to PCAF's bromodomain. In addition, the non-acetylated Tat's N-terminus can also interact with PCAF. PCAF-mediated acetylation of Lys-28 enhances Tat's binding to CCNT1. Lys-50 is deacetylated by SIRT1. Post-translationally, polyubiquitination by host MDM2 does not target Tat to degradation, but activates its transactivation function and fosters interaction with CCNT1 and TAR RNA. Phosphorylated by EIF2AK2 on serine and threonine residues adjacent to the basic region important for TAR RNA binding and function. Phosphorylation of Tat by EIF2AK2 is dependent on the prior activation of EIF2AK2 by dsRNA.

Its subcellular location is the host nucleus. The protein localises to the host nucleolus. The protein resides in the host cytoplasm. It is found in the secreted. In terms of biological role, transcriptional activator that increases RNA Pol II processivity, thereby increasing the level of full-length viral transcripts. Recognizes a hairpin structure at the 5'-LTR of the nascent viral mRNAs referred to as the transactivation responsive RNA element (TAR) and recruits the cyclin T1-CDK9 complex (P-TEFb complex) that will in turn hyperphosphorylate the RNA polymerase II to allow efficient elongation. The CDK9 component of P-TEFb and other Tat-activated kinases hyperphosphorylate the C-terminus of RNA Pol II that becomes stabilized and much more processive. Other factors such as HTATSF1/Tat-SF1, SUPT5H/SPT5, and HTATIP2 are also important for Tat's function. Besides its effect on RNA Pol II processivity, Tat induces chromatin remodeling of proviral genes by recruiting the histone acetyltransferases (HATs) CREBBP, EP300 and PCAF to the chromatin. This also contributes to the increase in proviral transcription rate, especially when the provirus integrates in transcriptionally silent region of the host genome. To ensure maximal activation of the LTR, Tat mediates nuclear translocation of NF-kappa-B by interacting with host RELA. Through its interaction with host TBP, Tat may also modulate transcription initiation. Tat can reactivate a latently infected cell by penetrating in it and transactivating its LTR promoter. In the cytoplasm, Tat is thought to act as a translational activator of HIV-1 mRNAs. Extracellular circulating Tat can be endocytosed by surrounding uninfected cells via the binding to several surface receptors such as CD26, CXCR4, heparan sulfate proteoglycans (HSPG) or LDLR. Neurons are rarely infected, but they internalize Tat via their LDLR. Through its interaction with nuclear HATs, Tat is potentially able to control the acetylation-dependent cellular gene expression. Modulates the expression of many cellular genes involved in cell survival, proliferation or in coding for cytokines or cytokine receptors. Tat plays a role in T-cell and neurons apoptosis. Tat induced neurotoxicity and apoptosis probably contribute to neuroAIDS. Circulating Tat also acts as a chemokine-like and/or growth factor-like molecule that binds to specific receptors on the surface of the cells, affecting many cellular pathways. In the vascular system, Tat binds to ITGAV/ITGB3 and ITGA5/ITGB1 integrins dimers at the surface of endothelial cells and competes with bFGF for heparin-binding sites, leading to an excess of soluble bFGF. This chain is Protein Tat, found in Homo sapiens (Human).